The following is a 312-amino-acid chain: MEAENLTELSKFLLLGLSDDPELQPVLFGLFLSMYLVTVLGNLLIILAVSSDSHLHTPMYFFLSNLSFVDICFISTTVPKMLVSIQARSKDISYMGCLTQVYFLMMFAGMDTFLLAVMAYDRFVAICHPLHYTVIMNPCLCGLLVLASWFIIFWFSLVHILLMKRLTFSTGTEIPHFFCEPAQVLKVACSNTLLNNIVLYVATALLGVFPVAGILFSYSQIVSSLMGMSSTKGKYKAFSTCGSHLCVVSLFYGTGLGVYLSSAVTHSSQSSSTASVMYAMVTPMLNPFIYSLRNKDVKGALERLLSRADSCP.

The Extracellular segment spans residues 1–25 (MEAENLTELSKFLLLGLSDDPELQP). N-linked (GlcNAc...) asparagine glycosylation occurs at N5. Residues 26-46 (VLFGLFLSMYLVTVLGNLLII) traverse the membrane as a helical segment. The Cytoplasmic segment spans residues 47-54 (LAVSSDSH). Residues 55–75 (LHTPMYFFLSNLSFVDICFIS) form a helical membrane-spanning segment. The Extracellular segment spans residues 76 to 99 (TTVPKMLVSIQARSKDISYMGCLT). Cysteines 97 and 189 form a disulfide. Residues 100–120 (QVYFLMMFAGMDTFLLAVMAY) form a helical membrane-spanning segment. Residues 121-139 (DRFVAICHPLHYTVIMNPC) lie on the Cytoplasmic side of the membrane. A helical transmembrane segment spans residues 140-160 (LCGLLVLASWFIIFWFSLVHI). At 161–197 (LLMKRLTFSTGTEIPHFFCEPAQVLKVACSNTLLNNI) the chain is on the extracellular side. The chain crosses the membrane as a helical span at residues 198 to 217 (VLYVATALLGVFPVAGILFS). Topologically, residues 218 to 237 (YSQIVSSLMGMSSTKGKYKA) are cytoplasmic. Residues 238–258 (FSTCGSHLCVVSLFYGTGLGV) traverse the membrane as a helical segment. Topologically, residues 259–271 (YLSSAVTHSSQSS) are extracellular. The helical transmembrane segment at 272–292 (STASVMYAMVTPMLNPFIYSL) threads the bilayer. The Cytoplasmic segment spans residues 293–312 (RNKDVKGALERLLSRADSCP).

This sequence belongs to the G-protein coupled receptor 1 family. Nasal olfactory epithelium.

Its subcellular location is the cell membrane. Functionally, odorant receptor. Selectively activated by androstenone and the related odorous steroid androstadienone. This chain is Olfactory receptor 7D4 (OR7D4), found in Homo sapiens (Human).